A 197-amino-acid polypeptide reads, in one-letter code: HTH-type transcriptional regulator BetI (197 aa).

The region spanning 8-68 (PIRRQQLIQA…ATMRHLMNAL (61 aa)) is the HTH tetR-type domain. The segment at residues 31–50 (SIALIARLAGVSNGIISHYF) is a DNA-binding region (H-T-H motif).

It functions in the pathway amine and polyamine biosynthesis; betaine biosynthesis via choline pathway [regulation]. Repressor involved in the biosynthesis of the osmoprotectant glycine betaine. It represses transcription of the choline transporter BetT and the genes of BetAB involved in the synthesis of glycine betaine. The polypeptide is HTH-type transcriptional regulator BetI (Pseudomonas savastanoi pv. phaseolicola (strain 1448A / Race 6) (Pseudomonas syringae pv. phaseolicola (strain 1448A / Race 6))).